The primary structure comprises 331 residues: Beta-ketoacyl-[acyl-carrier-protein] synthase III (331 aa).

Residues C113 and H256 contribute to the active site. The interval 257–261 (QANKR) is ACP-binding. N286 is an active-site residue.

The protein belongs to the thiolase-like superfamily. FabH family. Homodimer.

Its subcellular location is the cytoplasm. The catalysed reaction is malonyl-[ACP] + acetyl-CoA + H(+) = 3-oxobutanoyl-[ACP] + CO2 + CoA. The protein operates within lipid metabolism; fatty acid biosynthesis. Its function is as follows. Catalyzes the condensation reaction of fatty acid synthesis by the addition to an acyl acceptor of two carbons from malonyl-ACP. Catalyzes the first condensation reaction which initiates fatty acid synthesis and may therefore play a role in governing the total rate of fatty acid production. Possesses both acetoacetyl-ACP synthase and acetyl transacylase activities. Its substrate specificity determines the biosynthesis of branched-chain and/or straight-chain of fatty acids. The chain is Beta-ketoacyl-[acyl-carrier-protein] synthase III from Solibacter usitatus (strain Ellin6076).